A 642-amino-acid chain; its full sequence is Threonine--tRNA ligase (642 aa).

Residues Met-1–Thr-61 enclose the TGS domain. The segment at Asp-243–Pro-534 is catalytic. Cys-334, His-385, and His-511 together coordinate Zn(2+).

It belongs to the class-II aminoacyl-tRNA synthetase family. In terms of assembly, homodimer. Requires Zn(2+) as cofactor.

It localises to the cytoplasm. The catalysed reaction is tRNA(Thr) + L-threonine + ATP = L-threonyl-tRNA(Thr) + AMP + diphosphate + H(+). Catalyzes the attachment of threonine to tRNA(Thr) in a two-step reaction: L-threonine is first activated by ATP to form Thr-AMP and then transferred to the acceptor end of tRNA(Thr). Also edits incorrectly charged L-seryl-tRNA(Thr). This Shewanella baltica (strain OS155 / ATCC BAA-1091) protein is Threonine--tRNA ligase.